The chain runs to 706 residues: K(+)-insensitive pyrophosphate-energized proton pump (706 aa).

The next 5 membrane-spanning stretches (helical) occupy residues 1–21 (MTALWLIVLCGVLSVVYAIWA), 62–82 (IVIFVLLVYFLGFYVAIGFAI), 83–103 (GAILSGAAGFIGMNVSVRANV), 128–148 (GMLVAGLALLGVTLYFGFLVY), and 164–184 (VALGFGASLISIFARLGGGIF). Substrate is bound at residue lysine 186. Mg(2+)-binding residues include aspartate 189, aspartate 193, asparagine 216, and aspartate 219. The next 6 membrane-spanning stretches (helical) occupy residues 231 to 251 (LFETYAVTAVATMVLAAIFFA), 261 to 281 (TLPLAIGGICIITSIIGTFFV), 298 to 318 (IATGVLSLIGIAVVIYTLIGF), 328 to 348 (GMSLFECGVVGLIVTALIIWI), 376 to 398 (IQGLAISMEATALPAIVIIAGIL), and 412 to 432 (ATATMLALAGMIVALDAFGPV). Aspartate 434 is a binding site for Mg(2+). Transmembrane regions (helical) follow at residues 465 to 485 (AVTKGYAIGSAGLGALVLFAA), 516 to 536 (YVVVGLLFGGLLPYLFGAMGM), 585 to 605 (IIPSLLPVLSPIVVYFLIYAI), and 616 to 636 (AFSAVGAMLLGVIVTGLFVAI). Ca(2+) contacts are provided by aspartate 646, aspartate 672, and aspartate 676. Substrate is bound at residue lysine 679. Residues 685–705 (AVNPMIKITNIVALLLLAILA) form a helical membrane-spanning segment.

The protein belongs to the H(+)-translocating pyrophosphatase (TC 3.A.10) family. K(+)-insensitive subfamily. As to quaternary structure, homodimer. It depends on Mg(2+) as a cofactor.

Its subcellular location is the cell inner membrane. The enzyme catalyses diphosphate + H2O + H(+)(in) = 2 phosphate + 2 H(+)(out). Functionally, proton pump that utilizes the energy of pyrophosphate hydrolysis as the driving force for proton movement across the membrane. Generates a proton motive force. The polypeptide is K(+)-insensitive pyrophosphate-energized proton pump (Bradyrhizobium diazoefficiens (strain JCM 10833 / BCRC 13528 / IAM 13628 / NBRC 14792 / USDA 110)).